The primary structure comprises 244 residues: Small ribosomal subunit protein uS2 (244 aa).

The protein belongs to the universal ribosomal protein uS2 family.

This chain is Small ribosomal subunit protein uS2, found in Desulforudis audaxviator (strain MP104C).